The following is a 195-amino-acid chain: Lipid A acyltransferase PagP (195 aa).

The first 30 residues, 1 to 30 (MRLTLTSRSRLFVLSSLLFISTFDVLSAQA), serve as a signal peptide directing secretion. Active-site residues include H67, D110, and S111.

The protein belongs to the lipid A palmitoyltransferase family. Homodimer.

It localises to the cell outer membrane. The catalysed reaction is a lipid A + a 1,2-diacyl-sn-glycero-3-phosphocholine = a hepta-acyl lipid A + a 2-acyl-sn-glycero-3-phosphocholine. It carries out the reaction a lipid IVA + a 1,2-diacyl-sn-glycero-3-phosphocholine = a lipid IVB + a 2-acyl-sn-glycero-3-phosphocholine. The enzyme catalyses a lipid IIA + a 1,2-diacyl-sn-glycero-3-phosphocholine = a lipid IIB + a 2-acyl-sn-glycero-3-phosphocholine. Transfers a fatty acid residue from the sn-1 position of a phospholipid to the N-linked hydroxyfatty acid chain on the proximal unit of lipid A or its precursors. This chain is Lipid A acyltransferase PagP, found in Dickeya chrysanthemi (strain Ech1591) (Dickeya zeae (strain Ech1591)).